Consider the following 178-residue polypeptide: SPbeta prophage-derived uncharacterized protein YonC (178 aa).

The polypeptide is SPbeta prophage-derived uncharacterized protein YonC (yonC) (Bacillus subtilis (strain 168)).